Here is a 563-residue protein sequence, read N- to C-terminus: BOS complex subunit NCLN (563 aa).

An N-terminal signal peptide occupies residues 1–42; sequence MLEEAGEVLENMLKASCLPLGFIVFLPAVLLLVAPPLPAADA. The Lumenal segment spans residues 43–522; sequence AHEFTVYRMQ…VMNAYRVKPA (480 aa). 2 N-linked (GlcNAc...) asparagine glycosylation sites follow: N241 and N428. The helical transmembrane segment at 523 to 543 threads the bilayer; the sequence is VFDLLLAVGIAAYLGMAYVAV. The Cytoplasmic segment spans residues 544–563; that stretch reads QHFSLLYKTVQRLLVKAKTQ.

It belongs to the nicastrin family. In terms of assembly, component of the back of Sec61 (BOS) complex, composed of NCLN/Nicalin, NOMO (NOMO1, NOMO2 or NOMO3) and TMEM147. The BOS complex is part of the multi-pass translocon (MPT) complex, composed of three subcomplexes, the GEL complex (composed of RAB5IF/OPTI and TMCO1), the BOS complex (composed of NCLN/Nicalin, NOMO and TMEM147) and the PAT complex (composed of WDR83OS/Asterix and CCDC47). The MPT complex associates with the SEC61 complex. As to expression, highly expressed in pancreas and skeletal muscle and, at lower levels, in heart.

It localises to the endoplasmic reticulum membrane. Its function is as follows. Component of the multi-pass translocon (MPT) complex that mediates insertion of multi-pass membrane proteins into the lipid bilayer of membranes. The MPT complex takes over after the SEC61 complex: following membrane insertion of the first few transmembrane segments of proteins by the SEC61 complex, the MPT complex occludes the lateral gate of the SEC61 complex to promote insertion of subsequent transmembrane regions. May antagonize Nodal signaling and subsequent organization of axial structures during mesodermal patterning, via its interaction with NOMO. This chain is BOS complex subunit NCLN, found in Homo sapiens (Human).